Here is a 341-residue protein sequence, read N- to C-terminus: UPF0283 membrane protein VV2076 (341 aa).

Helical transmembrane passes span 64–84 (LAGG…VDSV), 93–113 (WLTL…LGAM), 207–227 (ESAA…LVAW), and 255–275 (LVLA…AGMD).

This sequence belongs to the UPF0283 family.

It localises to the cell inner membrane. This Vibrio vulnificus (strain YJ016) protein is UPF0283 membrane protein VV2076.